A 500-amino-acid chain; its full sequence is MKYNNRKLSFNPTTVSIAGTLLTVFFLTRLVLSFFSISLFQLVTFQGIFKPYVPDFKNTPSVEFYDLRNYQGNKDGWQQGDRILFCVPLRDASEHLPMFFNHLNTMTYPHNLIDLSFLVSDSSDNTMGVLLSNLQMAQSQQDKSKRFGNIEIYEKDFGQIIGQSFSDRHGFGAQGPRRKLMARARNWLGSVALKPYHSWVYWRDVDVETIPTTIMEDLMHHDKDVIVPNVWRPLPDWLGNIQPYDLNSWKESEGGLQLADSLDEDAVIVEGYPEYATWRPHLAYMRDPNGNPEDEMELDGIGGVSILAKAKVFRTGSHFPAFSFEKHAETEAFGRLSRRMNYNVIGLPHYVIWHIYEPSSDDLKHMAWMAEEEKRKLEEERIREFYNKIWEIGFEDVRDQWNEERDSILKNIDSTLNNKVTVDWSEEGDGSELVDSKGDFVSPNNQQQQQQQQQQQQQQQQQQQQQQLDGNPQGKPLDDNDKNKKKHPKEVPLDFDPDRN.

The Cytoplasmic segment spans residues 1 to 15 (MKYNNRKLSFNPTTV). A helical; Signal-anchor for type II membrane protein membrane pass occupies residues 16-27 (SIAGTLLTVFFL). At 28–500 (TRLVLSFFSI…VPLDFDPDRN (473 aa)) the chain is on the lumenal side. The interval 424–500 (WSEEGDGSEL…VPLDFDPDRN (77 aa)) is disordered. Residues 446-467 (QQQQQQQQQQQQQQQQQQQQQQ) show a composition bias toward low complexity. Residues 489–500 (KEVPLDFDPDRN) show a composition bias toward basic and acidic residues.

Belongs to the ANP1/MMN9/VAN1 family. As to quaternary structure, component of the M-Pol II complex composed of ANP1, MNN9, MNN10, MNN11 and HOC1.

The protein localises to the endoplasmic reticulum membrane. It is found in the golgi apparatus membrane. Functionally, involved in the organization of the secretory pathway. Required to maintain a functional Golgi apparatus. In terms of biological role, the M-Pol II complex possesses alpha-1,6-mannosyltransferase activity and is probably involved in the elongation of the mannan backbone of N-linked glycans on cell wall and periplasmic proteins. The protein is Mannan polymerase II complex ANP1 subunit (ANP1) of Saccharomyces cerevisiae (strain ATCC 204508 / S288c) (Baker's yeast).